Reading from the N-terminus, the 280-residue chain is Urease accessory protein UreD (280 aa).

This sequence belongs to the UreD family. As to quaternary structure, ureD, UreF and UreG form a complex that acts as a GTP-hydrolysis-dependent molecular chaperone, activating the urease apoprotein by helping to assemble the nickel containing metallocenter of UreC. The UreE protein probably delivers the nickel.

The protein resides in the cytoplasm. Functionally, required for maturation of urease via the functional incorporation of the urease nickel metallocenter. In Pseudomonas aeruginosa (strain UCBPP-PA14), this protein is Urease accessory protein UreD.